The chain runs to 158 residues: Large ribosomal subunit protein uL16 (158 aa).

Belongs to the universal ribosomal protein uL16 family. As to quaternary structure, part of the 50S ribosomal subunit.

In terms of biological role, binds 23S rRNA and is also seen to make contacts with the A and possibly P site tRNAs. In Synechococcus sp. (strain CC9605), this protein is Large ribosomal subunit protein uL16.